We begin with the raw amino-acid sequence, 544 residues long: Thermosome subunit (544 aa).

It belongs to the TCP-1 chaperonin family. As to quaternary structure, forms an oligomeric complex of eight-membered rings.

Its function is as follows. Molecular chaperone; binds unfolded polypeptides in vitro, and has a weak ATPase activity. The polypeptide is Thermosome subunit (ths) (Methanothermococcus thermolithotrophicus (Methanococcus thermolithotrophicus)).